Reading from the N-terminus, the 104-residue chain is L-rhamnose mutarotase (104 aa).

Tyr18 contributes to the substrate binding site. Catalysis depends on His22, which acts as the Proton donor. Substrate is bound by residues Tyr41 and 76–77; that span reads WW.

This sequence belongs to the rhamnose mutarotase family. As to quaternary structure, homodimer.

The protein localises to the cytoplasm. The catalysed reaction is alpha-L-rhamnose = beta-L-rhamnose. The protein operates within carbohydrate metabolism; L-rhamnose metabolism. In terms of biological role, involved in the anomeric conversion of L-rhamnose. The protein is L-rhamnose mutarotase of Lachnoclostridium phytofermentans (strain ATCC 700394 / DSM 18823 / ISDg) (Clostridium phytofermentans).